Here is a 129-residue protein sequence, read N- to C-terminus: MSSSQTLPKYVSIVSTNRWIISKVSSSLSTSGVIPTIKYRLAYRLYTTLWSLYSMMLHILGFLANIVGVKSFTIFAFSPADIAVYHFFNLIFPCLETSNKYFNCVILCTCVSVYNLLQDRSCSWLKLLL.

The next 3 membrane-spanning stretches (helical) occupy residues 49 to 69 (LWSL…IVGV), 72 to 92 (FTIF…NLIF), and 101 to 118 (YFNC…NLLQ).

It is found in the membrane. This is an uncharacterized protein from Saccharomyces cerevisiae (strain ATCC 204508 / S288c) (Baker's yeast).